A 1096-amino-acid chain; its full sequence is Pullulanase (1096 aa).

An N-terminal signal peptide occupies residues 1 to 19 (MLRYTCHALFLGSLVLLSG). C20 carries N-palmitoyl cysteine lipidation. Residue C20 is the site of S-diacylglycerol cysteine attachment. Low complexity predominate over residues 24-34 (SSSSTSGSPGS). Positions 24-50 (SSSSTSGSPGSPGNPGNPGTPGTPDPQ) are disordered. The active-site Nucleophile is D694. Catalysis depends on E723, which acts as the Proton donor. Residues 1014 to 1044 (QAGRQSGQPCRRHRGGDQRRAGKPDAAGLRR) form a disordered region.

It belongs to the glycosyl hydrolase 13 family. As to quaternary structure, homotrimer.

It localises to the cell membrane. It catalyses the reaction Hydrolysis of (1-&gt;6)-alpha-D-glucosidic linkages in pullulan, amylopectin and glycogen, and in the alpha- and beta-limit dextrins of amylopectin and glycogen.. In Klebsiella aerogenes (Enterobacter aerogenes), this protein is Pullulanase (pulA).